The sequence spans 418 residues: Gamma-glutamyl phosphate reductase (418 aa).

Belongs to the gamma-glutamyl phosphate reductase family.

The protein resides in the cytoplasm. The catalysed reaction is L-glutamate 5-semialdehyde + phosphate + NADP(+) = L-glutamyl 5-phosphate + NADPH + H(+). It functions in the pathway amino-acid biosynthesis; L-proline biosynthesis; L-glutamate 5-semialdehyde from L-glutamate: step 2/2. Catalyzes the NADPH-dependent reduction of L-glutamate 5-phosphate into L-glutamate 5-semialdehyde and phosphate. The product spontaneously undergoes cyclization to form 1-pyrroline-5-carboxylate. In Photobacterium profundum (strain SS9), this protein is Gamma-glutamyl phosphate reductase.